The following is a 200-amino-acid chain: Lipopolysaccharide core heptose(II)-phosphate phosphatase (200 aa).

The first 25 residues, 1–25 (MLAFCRSSLKSKKYFIILLALAAIA), serve as a signal peptide directing secretion.

It belongs to the phosphoglycerate mutase family. Ais subfamily.

The protein resides in the periplasm. Its pathway is bacterial outer membrane biogenesis; lipopolysaccharide metabolism. Functionally, catalyzes the dephosphorylation of heptose(II) of the outer membrane lipopolysaccharide core. The polypeptide is Lipopolysaccharide core heptose(II)-phosphate phosphatase (Escherichia coli O6:H1 (strain CFT073 / ATCC 700928 / UPEC)).